The primary structure comprises 435 residues: MTQLEAARKGKITEEMAYVAEKEGVSPEFVREGVAAGRIVIPRNPNHKTLTDFKGIGEGLSVKVNANLGTSYDYVNVEEEVEKARVAIQYGADTVMDLSTGGDLKAIRKRILEVATVPLGTVPIYEAEFRAARRKNFFDMSADELFQVIEEHGKEGVDYITVHVGVTLKNLEVYRNSPRTTGIVSRGGGLMAAWMLHRGEENPLYARFDDLLDIARTYDMTLSLGDGLRPGSLADSTDRAQIAELLTIGELVERARRAGVQAMVEGPGHIPLNEVAANVQIQKKLTGHAPFYILGMLPVDTAAGFDHIAGAIGGALAGWWGADMLCYLTPAEHLGLPTPEHVKQGVIAFKIAAHAADVARGNKRALERNRRMSEARYRLDWEGQFALALFPEEARRLKEERGSKTKACSMCGPFCPMNLVEAVLKGKGRMELPVA.

Residues N67, M96, Y125, H163, 185-187, 226-229, and E265 contribute to the substrate site; these read SRG and DGLR. A Zn(2+)-binding site is contributed by H269. Y292 provides a ligand contact to substrate. A Zn(2+)-binding site is contributed by H333. Residues C408, C411, and C415 each coordinate [4Fe-4S] cluster.

This sequence belongs to the ThiC family. [4Fe-4S] cluster is required as a cofactor.

The enzyme catalyses 5-amino-1-(5-phospho-beta-D-ribosyl)imidazole + S-adenosyl-L-methionine = 4-amino-2-methyl-5-(phosphooxymethyl)pyrimidine + CO + 5'-deoxyadenosine + formate + L-methionine + 3 H(+). Its pathway is cofactor biosynthesis; thiamine diphosphate biosynthesis. Catalyzes the synthesis of the hydroxymethylpyrimidine phosphate (HMP-P) moiety of thiamine from aminoimidazole ribotide (AIR) in a radical S-adenosyl-L-methionine (SAM)-dependent reaction. The protein is Phosphomethylpyrimidine synthase of Thermus thermophilus (strain ATCC BAA-163 / DSM 7039 / HB27).